Here is a 190-residue protein sequence, read N- to C-terminus: dCTP deaminase, dUMP-forming (190 aa).

DCTP-binding positions include lysine 101–arginine 106, aspartate 119, threonine 127–glutamate 129, glutamine 148, tyrosine 162, and glutamine 174. Glutamate 129 serves as the catalytic Proton donor/acceptor. Residues proline 161 to threonine 190 are disordered. Polar residues predominate over residues tyrosine 171–threonine 190.

It belongs to the dCTP deaminase family. Homotrimer.

It catalyses the reaction dCTP + 2 H2O = dUMP + NH4(+) + diphosphate. Its pathway is pyrimidine metabolism; dUMP biosynthesis; dUMP from dCTP: step 1/1. In terms of biological role, bifunctional enzyme that catalyzes both the deamination of dCTP to dUTP and the hydrolysis of dUTP to dUMP without releasing the toxic dUTP intermediate. This chain is dCTP deaminase, dUMP-forming, found in Mycobacterium ulcerans (strain Agy99).